We begin with the raw amino-acid sequence, 173 residues long: ATP-dependent protease subunit HslV (173 aa).

Residue Thr2 is part of the active site. Na(+) contacts are provided by Gly158, Asp161, and Ser164.

Belongs to the peptidase T1B family. HslV subfamily. In terms of assembly, a double ring-shaped homohexamer of HslV is capped on each side by a ring-shaped HslU homohexamer. The assembly of the HslU/HslV complex is dependent on binding of ATP.

Its subcellular location is the cytoplasm. It catalyses the reaction ATP-dependent cleavage of peptide bonds with broad specificity.. Allosterically activated by HslU binding. Its function is as follows. Protease subunit of a proteasome-like degradation complex believed to be a general protein degrading machinery. This chain is ATP-dependent protease subunit HslV, found in Glaesserella parasuis serovar 5 (strain SH0165) (Haemophilus parasuis).